Consider the following 133-residue polypeptide: Small ribosomal subunit protein uS8 (133 aa).

This sequence belongs to the universal ribosomal protein uS8 family. Part of the 30S ribosomal subunit.

Its function is as follows. One of the primary rRNA binding proteins, it binds directly to 16S rRNA central domain where it helps coordinate assembly of the platform of the 30S subunit. The polypeptide is Small ribosomal subunit protein uS8 (Metallosphaera sedula (strain ATCC 51363 / DSM 5348 / JCM 9185 / NBRC 15509 / TH2)).